Here is a 207-residue protein sequence, read N- to C-terminus: Large ribosomal subunit protein uL3 (207 aa).

Belongs to the universal ribosomal protein uL3 family. In terms of assembly, part of the 50S ribosomal subunit. Forms a cluster with proteins L14 and L19.

In terms of biological role, one of the primary rRNA binding proteins, it binds directly near the 3'-end of the 23S rRNA, where it nucleates assembly of the 50S subunit. The chain is Large ribosomal subunit protein uL3 from Desulforapulum autotrophicum (strain ATCC 43914 / DSM 3382 / VKM B-1955 / HRM2) (Desulfobacterium autotrophicum).